The sequence spans 396 residues: Na(+)/H(+) antiporter NhaA (396 aa).

11 consecutive transmembrane segments (helical) span residues 16 to 36 (GIILIMAAMLAMILANSGLAG), 59 to 79 (LLLWINDGFMAVFFLLVGLEV), 95 to 115 (TFPAIAAVGGMLAPALIYAFF), 124 to 144 (AGWAIPAATDIAFALGVMALL), 154 to 174 (VFLLALAIMDDLGVIIIIALF), 178 to 198 (QLSLTALAIGILATLTLLWMN), 213 to 233 (LVLWVAVLKSGVHATLAGVIV), 254 to 274 (ALHPWSAYLILPLFAFANAGV), 278 to 298 (GIGLSALLSPVPLGIMLGLFI), 328 to 348 (IFAVSILCGIGFTMSMFIASL), and 363 to 383 (LGILVGSTLAAIVGYLALRIA).

Belongs to the NhaA Na(+)/H(+) (TC 2.A.33) antiporter family.

It is found in the cell inner membrane. The catalysed reaction is Na(+)(in) + 2 H(+)(out) = Na(+)(out) + 2 H(+)(in). Na(+)/H(+) antiporter that extrudes sodium in exchange for external protons. This chain is Na(+)/H(+) antiporter NhaA, found in Aeromonas hydrophila subsp. hydrophila (strain ATCC 7966 / DSM 30187 / BCRC 13018 / CCUG 14551 / JCM 1027 / KCTC 2358 / NCIMB 9240 / NCTC 8049).